The sequence spans 211 residues: Probable nicotinate-nucleotide adenylyltransferase (211 aa).

Belongs to the NadD family.

The enzyme catalyses nicotinate beta-D-ribonucleotide + ATP + H(+) = deamido-NAD(+) + diphosphate. Its pathway is cofactor biosynthesis; NAD(+) biosynthesis; deamido-NAD(+) from nicotinate D-ribonucleotide: step 1/1. Its function is as follows. Catalyzes the reversible adenylation of nicotinate mononucleotide (NaMN) to nicotinic acid adenine dinucleotide (NaAD). The sequence is that of Probable nicotinate-nucleotide adenylyltransferase from Shewanella sediminis (strain HAW-EB3).